We begin with the raw amino-acid sequence, 451 residues long: Bifunctional protein GlmU (451 aa).

A pyrophosphorylase region spans residues 1-231 (MDSPLAIIVL…ADEVAGINSR (231 aa)). UDP-N-acetyl-alpha-D-glucosamine is bound by residues 10-13 (LAAG), Lys24, Gln74, 79-80 (GT), 102-104 (YGD), Gly142, Glu156, Asn171, and Asn229. Mg(2+) is bound at residue Asp104. Residue Asn229 participates in Mg(2+) binding. Positions 232–252 (GELAEAEGRWQQRRRAAAMAD) are linker. The N-acetyltransferase stretch occupies residues 253-451 (GASLIAPETV…MKKKKAEKKS (199 aa)). UDP-N-acetyl-alpha-D-glucosamine-binding residues include Arg318 and Lys336. His348 (proton acceptor) is an active-site residue. Residues Tyr351 and Asn362 each contribute to the UDP-N-acetyl-alpha-D-glucosamine site. Acetyl-CoA contacts are provided by residues Ala365, 371 to 372 (NY), Ser390, Ala408, and Arg425.

The protein in the N-terminal section; belongs to the N-acetylglucosamine-1-phosphate uridyltransferase family. In the C-terminal section; belongs to the transferase hexapeptide repeat family. As to quaternary structure, homotrimer. Requires Mg(2+) as cofactor.

It is found in the cytoplasm. The catalysed reaction is alpha-D-glucosamine 1-phosphate + acetyl-CoA = N-acetyl-alpha-D-glucosamine 1-phosphate + CoA + H(+). It carries out the reaction N-acetyl-alpha-D-glucosamine 1-phosphate + UTP + H(+) = UDP-N-acetyl-alpha-D-glucosamine + diphosphate. It functions in the pathway nucleotide-sugar biosynthesis; UDP-N-acetyl-alpha-D-glucosamine biosynthesis; N-acetyl-alpha-D-glucosamine 1-phosphate from alpha-D-glucosamine 6-phosphate (route II): step 2/2. Its pathway is nucleotide-sugar biosynthesis; UDP-N-acetyl-alpha-D-glucosamine biosynthesis; UDP-N-acetyl-alpha-D-glucosamine from N-acetyl-alpha-D-glucosamine 1-phosphate: step 1/1. It participates in bacterial outer membrane biogenesis; LPS lipid A biosynthesis. Catalyzes the last two sequential reactions in the de novo biosynthetic pathway for UDP-N-acetylglucosamine (UDP-GlcNAc). The C-terminal domain catalyzes the transfer of acetyl group from acetyl coenzyme A to glucosamine-1-phosphate (GlcN-1-P) to produce N-acetylglucosamine-1-phosphate (GlcNAc-1-P), which is converted into UDP-GlcNAc by the transfer of uridine 5-monophosphate (from uridine 5-triphosphate), a reaction catalyzed by the N-terminal domain. The sequence is that of Bifunctional protein GlmU from Novosphingobium aromaticivorans (strain ATCC 700278 / DSM 12444 / CCUG 56034 / CIP 105152 / NBRC 16084 / F199).